A 288-amino-acid polypeptide reads, in one-letter code: NGG1-interacting factor 3 (288 aa).

It belongs to the GTP cyclohydrolase I type 2/NIF3 family. In terms of assembly, may interact with NGG1.

It localises to the mitochondrion. In Saccharomyces cerevisiae (strain ATCC 204508 / S288c) (Baker's yeast), this protein is NGG1-interacting factor 3.